Reading from the N-terminus, the 457-residue chain is Multidrug resistance protein MdtK (457 aa).

12 consecutive transmembrane segments (helical) span residues 11–31, 53–73, 93–113, 127–147, 160–180, 188–208, 243–263, 276–296, 314–334, 350–370, 387–407, and 418–438; these read LLAL…MGFV, IWLP…PVIA, WLAG…GYII, AVGY…FQVA, GMVM…IFIY, LGGI…FIAM, LPIA…ALLV, IALN…AAVT, AART…IFTV, VVAL…SDSI, IFFI…YILA, and PAGF…LMML.

It belongs to the multi antimicrobial extrusion (MATE) (TC 2.A.66.1) family. MdtK subfamily.

It localises to the cell inner membrane. In terms of biological role, multidrug efflux pump that functions probably as a Na(+)/drug antiporter. The chain is Multidrug resistance protein MdtK from Salmonella enteritidis PT4 (strain P125109).